The primary structure comprises 376 residues: Protein STRICTOSIDINE SYNTHASE-LIKE 2 (376 aa).

The first 23 residues, 1–23 (MMKLLLVVATSVALIFSVTDLSG), serve as a signal peptide directing secretion. N-linked (GlcNAc...) asparagine glycans are attached at residues Asn-79 and Asn-244.

Belongs to the strictosidine synthase family.

It is found in the vacuole. The chain is Protein STRICTOSIDINE SYNTHASE-LIKE 2 from Arabidopsis thaliana (Mouse-ear cress).